Consider the following 505-residue polypeptide: MFFSKDLPSPTSVFTAYASMAGYMMMIRSMAHELIPAPLQDFIYRTLRSLFFRSSSSTLTLTIDDDNMGMNNEIYRAAQTYLSTKISPDAVRLRISKGHKDKHVNLYLSDGEIVNDVYEDVQLVWRFVTDGGDKKGGGGGVGGRGGGGGRRGGMDDDGKSEYFELSFDKKHKDLILNSYVPYIESKAKEIRDERRILMLHSLNSLRWESVILEHPSTFETMAMEDDLKRDVIEDLDRFIRRKEFYKRVGKAWKRGYLLYGPPGTGKSSLVAAMANYLKFDVYDLQLASVMRDSDLRRLLLATRNRSILVIEDIDCAVDLPNRIEQPVEGKNRGESQGPLTLSGLLNFIDGLWSSCGDERIIIFTTNHKDRLDPALLRPGRMDMHIYMGHCSFQGFKTLASNYLGLSDAAMPHRLFPEIERLIDGEVMTPAQVAEELMKSEDADVALEGLVNVLEKMRLKSKESNPVMMKQKESRLEMEEMRLKSDTEGSPRKNSKRFKKLVLFWT.

The helical transmembrane segment at 11 to 27 (TSVFTAYASMAGYMMMI) threads the bilayer. The segment at 136-155 (GGGGGVGGRGGGGGRRGGMD) is disordered. The segment covering 137–151 (GGGGVGGRGGGGGRR) has biased composition (gly residues). 260 to 267 (GPPGTGKS) provides a ligand contact to ATP.

It belongs to the AAA ATPase family. BCS1 subfamily. It depends on Mg(2+) as a cofactor.

Its subcellular location is the membrane. It carries out the reaction ATP + H2O = ADP + phosphate + H(+). This Arabidopsis thaliana (Mouse-ear cress) protein is AAA-ATPase At5g17760.